Consider the following 356-residue polypeptide: 3'-5' exonuclease (356 aa).

The tract at residues 1-120 (MDKYLIKMPT…TPSPEKEKPE (120 aa)) is disordered. 2 stretches are compositionally biased toward basic and acidic residues: residues 29–56 (TIDKQKEKNTPTEKQKQEDDYVEKENTP) and 71–85 (KNQDTPTEVKDIKNE). The segment covering 99–113 (LTRSTRSMAEEGTPS) has biased composition (low complexity). 2 positions are modified to phosphoserine: serine 105 and serine 113. Residues 155-316 (TTLDVVPMAF…GQVIYRDLEQ (162 aa)) form the 3'-5' exonuclease domain. Positions 165, 167, and 303 each coordinate Mg(2+).

Belongs to the WRNexo family.

The protein localises to the nucleus. Functionally, has exonuclease activity on both single-stranded and duplex templates bearing overhangs, but not blunt ended duplex DNA, and cleaves in a 3'-5' direction. Essential for the formation of DNA replication focal centers. Has an important role in maintaining genome stability. The protein is 3'-5' exonuclease of Drosophila willistoni (Fruit fly).